Consider the following 310-residue polypeptide: Serine/threonine-protein phosphatase 4 catalytic subunit (310 aa).

The Mn(2+) site is built by Asp-53, His-55, Asp-81, and Asn-113. The active-site Proton donor is the His-114. Residues His-163 and His-237 each coordinate Mn(2+). At Leu-310 the chain carries Leucine methyl ester.

The protein belongs to the PPP phosphatase family. PP-4 (PP-X) subfamily. In terms of assembly, catalytic subunit of the histone H2A phosphatase complex (HTP-C) containing PPH3, PSY2 and PSY4. The cofactor is Mn(2+).

The protein resides in the cytoplasm. The protein localises to the nucleus. It catalyses the reaction O-phospho-L-seryl-[protein] + H2O = L-seryl-[protein] + phosphate. It carries out the reaction O-phospho-L-threonyl-[protein] + H2O = L-threonyl-[protein] + phosphate. Functionally, involved in the dephosphorylation and activation of the transcription factor GLN3 in response to nutrient availability. Forms the histone H2A phosphatase complex in association with the regulatory subunits PSY2 and PSY4, which dephosphorylates H2AS128ph (gamma-H2A) that has been displaced from sites of DNA lesions in the double-stranded DNA break repair process. Dephosphorylation is necessary for efficient recovery from the DNA damage checkpoint. In Eremothecium gossypii (strain ATCC 10895 / CBS 109.51 / FGSC 9923 / NRRL Y-1056) (Yeast), this protein is Serine/threonine-protein phosphatase 4 catalytic subunit (PPH3).